Consider the following 462-residue polypeptide: Iroquois-class homeodomain protein irx-1-B (462 aa).

The homeobox; TALE-type DNA-binding region spans 121–183 (DPGRPKNATR…NARRRLKKEN (63 aa)). 3 disordered regions span residues 191 to 302 (GKED…PHSK), 314 to 339 (SPDG…QHPA), and 405 to 462 (SLSS…LPSA). Acidic residues-rich tracts occupy residues 210–220 (EDDEEIDLESI) and 228–239 (NDGEQSNEEEDE). Basic and acidic residues predominate over residues 240-257 (KLDHFRHGEKVSLKKESE). The span at 410-426 (RTPERTSPKHSDRENLP) shows a compositional bias: basic and acidic residues. The segment covering 446–455 (FSQQEGTSRI) has biased composition (polar residues).

The protein belongs to the TALE/IRO homeobox family.

The protein localises to the nucleus. In terms of biological role, acts partially redundantly with other irx members in neural patterning. Required for formation of the posterior forebrain, midbrain, hindbrain, and to a lesser extent, spinal cord. Acts early in neural plate development to induce expression of some but not all proneural genes, and specify a neural precursor state. Also up-regulates repressors that prevent neuronal differentiation. Patterns the neuroectoderm in both the anterior/posterior and dorsal/ventral axes. Acts primarily as a transcriptional repressor during neural development, and binds to the bmp4 promoter to repress gene expression and thus mediate down-regulation of bmp4 by wnt signaling. Controls multiple processes through bmp4-repression including neural plate development, neural crest specification and Spemann organizer development. Involved in the specification of the preplacodal field at the anterior border of the neural plate. Regulates the genetic cascade of interactions that are necessary for positioning the isthmus organizer and the formation of the midbrain-hindbrain boundary. Required during at least two stages of pronephros kidney development; during neurula stages, maintains transcription of key renal genes to define the size and identity of the pronephric anlage, probably in part through regulation of bmp-signaling. Subsequently required for proper formation of the intermediate tubule segment of the pronephros. Acts principally as a transcriptional activator during pronephros development. This chain is Iroquois-class homeodomain protein irx-1-B (irx1-b), found in Xenopus laevis (African clawed frog).